The primary structure comprises 152 residues: Flagellar assembly factor FliW (152 aa).

It belongs to the FliW family. In terms of assembly, interacts with translational regulator CsrA and flagellin(s).

Its subcellular location is the cytoplasm. Functionally, acts as an anti-CsrA protein, binds CsrA and prevents it from repressing translation of its target genes, one of which is flagellin. Binds to flagellin and participates in the assembly of the flagellum. The polypeptide is Flagellar assembly factor FliW (Caldicellulosiruptor saccharolyticus (strain ATCC 43494 / DSM 8903 / Tp8T 6331)).